A 21-amino-acid polypeptide reads, in one-letter code: MKHIQIRNSDMDWHIAANNLG.

This Escherichia coli (strain K12) protein is Protein YmjD (ymjD).